The sequence spans 251 residues: Uridylate kinase (251 aa).

Lys26–Gly29 is an ATP binding site. Gly67 provides a ligand contact to UMP. 2 residues coordinate ATP: Gly68 and Arg72. UMP-binding positions include Asp87 and Met148–Thr155. The ATP site is built by Phe181 and Asp184.

It belongs to the UMP kinase family. As to quaternary structure, homohexamer.

Its subcellular location is the cytoplasm. The enzyme catalyses UMP + ATP = UDP + ADP. The protein operates within pyrimidine metabolism; CTP biosynthesis via de novo pathway; UDP from UMP (UMPK route): step 1/1. Inhibited by UTP. Functionally, catalyzes the reversible phosphorylation of UMP to UDP. The polypeptide is Uridylate kinase (Mycolicibacterium vanbaalenii (strain DSM 7251 / JCM 13017 / BCRC 16820 / KCTC 9966 / NRRL B-24157 / PYR-1) (Mycobacterium vanbaalenii)).